The sequence spans 1165 residues: Autophagy-related protein 11 (1165 aa).

Coiled coils occupy residues 239 to 304 (NKLN…YKNM) and 670 to 853 (DNIR…KQKK).

This sequence belongs to the ATG11 family. Homodimer and potential homooligomers.

Its subcellular location is the preautophagosomal structure membrane. Plays an essential role in both non-selective and selective autophagy such as mitophagy. Recruits mitochondria for their selective degradation via autophagy (mitophagy) during starvation, through its interaction with ATG32. Works as scaffold proteins that recruit ATG proteins to the pre-autophagosome (PAS), the site of vesicle/autophagosome formation. Required for ATG9 anterograde transport from the mitochondria to the PAS. The protein is Autophagy-related protein 11 of Candida albicans (strain SC5314 / ATCC MYA-2876) (Yeast).